The following is a 277-amino-acid chain: Large ribosomal subunit protein uL2 (277 aa).

The disordered stretch occupies residues 222-259 (GSVMNPNDHPHGGGEGKSPVGRPSPVTPWGKPALGYKT).

This sequence belongs to the universal ribosomal protein uL2 family. As to quaternary structure, part of the 50S ribosomal subunit. Forms a bridge to the 30S subunit in the 70S ribosome.

In terms of biological role, one of the primary rRNA binding proteins. Required for association of the 30S and 50S subunits to form the 70S ribosome, for tRNA binding and peptide bond formation. It has been suggested to have peptidyltransferase activity; this is somewhat controversial. Makes several contacts with the 16S rRNA in the 70S ribosome. The sequence is that of Large ribosomal subunit protein uL2 from Clostridium beijerinckii (strain ATCC 51743 / NCIMB 8052) (Clostridium acetobutylicum).